Here is a 316-residue protein sequence, read N- to C-terminus: HPr kinase/phosphorylase (316 aa).

Residues His-143 and Lys-164 contribute to the active site. 158 to 165 (GEAGSGKS) lines the ATP pocket. Ser-165 contributes to the Mg(2+) binding site. The Proton acceptor; for phosphorylation activity. Proton donor; for dephosphorylation activity role is filled by Asp-182. The interval 206-215 (LEVRGLGVLN) is important for the catalytic mechanism of both phosphorylation and dephosphorylation. Residue Glu-207 coordinates Mg(2+). Arg-251 is a catalytic residue. The tract at residues 272-277 (PVMPGR) is important for the catalytic mechanism of dephosphorylation.

The protein belongs to the HPrK/P family. As to quaternary structure, homohexamer. Requires Mg(2+) as cofactor.

It catalyses the reaction [HPr protein]-L-serine + ATP = [HPr protein]-O-phospho-L-serine + ADP + H(+). It carries out the reaction [HPr protein]-O-phospho-L-serine + phosphate + H(+) = [HPr protein]-L-serine + diphosphate. Catalyzes the ATP- as well as the pyrophosphate-dependent phosphorylation of a specific serine residue in HPr, a phosphocarrier protein of the phosphoenolpyruvate-dependent sugar phosphotransferase system (PTS). HprK/P also catalyzes the pyrophosphate-producing, inorganic phosphate-dependent dephosphorylation (phosphorolysis) of seryl-phosphorylated HPr (P-Ser-HPr). This is HPr kinase/phosphorylase from Xanthomonas oryzae pv. oryzae (strain MAFF 311018).